Consider the following 108-residue polypeptide: Large ribosomal subunit protein uL24 (108 aa).

It belongs to the universal ribosomal protein uL24 family. In terms of assembly, part of the 50S ribosomal subunit.

Functionally, one of two assembly initiator proteins, it binds directly to the 5'-end of the 23S rRNA, where it nucleates assembly of the 50S subunit. Its function is as follows. One of the proteins that surrounds the polypeptide exit tunnel on the outside of the subunit. This Geobacter metallireducens (strain ATCC 53774 / DSM 7210 / GS-15) protein is Large ribosomal subunit protein uL24.